The following is a 75-amino-acid chain: MFGLSPAQLIILLVVILLIFGTKKLRNAGSDLGAAVKGFKKAMKEDEKVKDAEFKSIDNETASAKKENIKEKEQA.

Residues Met-1–Gly-21 traverse the membrane as a helical segment.

It belongs to the TatA/E family. As to quaternary structure, the Tat system comprises two distinct complexes: a TatABC complex, containing multiple copies of TatA, TatB and TatC subunits, and a separate TatA complex, containing only TatA subunits. Substrates initially bind to the TatABC complex, which probably triggers association of the separate TatA complex to form the active translocon.

The protein resides in the cell inner membrane. In terms of biological role, part of the twin-arginine translocation (Tat) system that transports large folded proteins containing a characteristic twin-arginine motif in their signal peptide across membranes. TatA could form the protein-conducting channel of the Tat system. The polypeptide is Sec-independent protein translocase protein TatA (Haemophilus influenzae (strain PittEE)).